The primary structure comprises 650 residues: Threonine--tRNA ligase (650 aa).

The 63-residue stretch at 3 to 65 (DLVKVTLPDG…DRDARLEIVT (63 aa)) folds into the TGS domain. The tract at residues 248-548 (DHRRLGPQLG…LTEHYAGAFP (301 aa)) is catalytic. The Zn(2+) site is built by Cys349, His400, and His525.

It belongs to the class-II aminoacyl-tRNA synthetase family. In terms of assembly, homodimer. Zn(2+) serves as cofactor.

The protein resides in the cytoplasm. The catalysed reaction is tRNA(Thr) + L-threonine + ATP = L-threonyl-tRNA(Thr) + AMP + diphosphate + H(+). Catalyzes the attachment of threonine to tRNA(Thr) in a two-step reaction: L-threonine is first activated by ATP to form Thr-AMP and then transferred to the acceptor end of tRNA(Thr). Also edits incorrectly charged L-seryl-tRNA(Thr). This Anaeromyxobacter dehalogenans (strain 2CP-C) protein is Threonine--tRNA ligase.